The sequence spans 160 residues: Crossover junction endodeoxyribonuclease RuvC (160 aa).

Catalysis depends on residues D9, E68, and D141. Residues D9, E68, and D141 each coordinate Mg(2+).

This sequence belongs to the RuvC family. Homodimer which binds Holliday junction (HJ) DNA. The HJ becomes 2-fold symmetrical on binding to RuvC with unstacked arms; it has a different conformation from HJ DNA in complex with RuvA. In the full resolvosome a probable DNA-RuvA(4)-RuvB(12)-RuvC(2) complex forms which resolves the HJ. Requires Mg(2+) as cofactor.

The protein resides in the cytoplasm. The catalysed reaction is Endonucleolytic cleavage at a junction such as a reciprocal single-stranded crossover between two homologous DNA duplexes (Holliday junction).. Its function is as follows. The RuvA-RuvB-RuvC complex processes Holliday junction (HJ) DNA during genetic recombination and DNA repair. Endonuclease that resolves HJ intermediates. Cleaves cruciform DNA by making single-stranded nicks across the HJ at symmetrical positions within the homologous arms, yielding a 5'-phosphate and a 3'-hydroxyl group; requires a central core of homology in the junction. The consensus cleavage sequence is 5'-(A/T)TT(C/G)-3'. Cleavage occurs on the 3'-side of the TT dinucleotide at the point of strand exchange. HJ branch migration catalyzed by RuvA-RuvB allows RuvC to scan DNA until it finds its consensus sequence, where it cleaves and resolves the cruciform DNA. In Campylobacter jejuni subsp. jejuni serotype O:23/36 (strain 81-176), this protein is Crossover junction endodeoxyribonuclease RuvC.